Here is a 282-residue protein sequence, read N- to C-terminus: Putative glycosyltransferase HI_0765 (282 aa).

The protein belongs to the glycosyltransferase 25 family.

This is Putative glycosyltransferase HI_0765 from Haemophilus influenzae (strain ATCC 51907 / DSM 11121 / KW20 / Rd).